We begin with the raw amino-acid sequence, 283 residues long: Probable voltage-dependent anion-selective channel (283 aa).

The protein belongs to the eukaryotic mitochondrial porin family.

It localises to the mitochondrion outer membrane. Its function is as follows. Forms a channel through the cell membrane that allows diffusion of small hydrophilic molecules. Plays a role in maintaining mitochondrial morphology. This is Probable voltage-dependent anion-selective channel from Caenorhabditis elegans.